The primary structure comprises 197 residues: MFRNSDFDIFEDKTLNGRMEKIRTIIDPKFEEFASIALPILNTNGQEWYAHVAKHLRRTTYAPDNTWVAFAPNKRGYKMLPHFELGIWEDNVYFYLAVEENMKPDQTNVITQKLREVSPLVRELPDSYRLSQDHMVNKTYSLLQYDDSIERYESVKHSEVLIGVEIKRGDKLWDGDGIVDTLVLAMKNLLPIYEKIK.

The protein belongs to the UPF0637 family.

In Leuconostoc mesenteroides subsp. mesenteroides (strain ATCC 8293 / DSM 20343 / BCRC 11652 / CCM 1803 / JCM 6124 / NCDO 523 / NBRC 100496 / NCIMB 8023 / NCTC 12954 / NRRL B-1118 / 37Y), this protein is UPF0637 protein LEUM_0496.